The primary structure comprises 339 residues: DNA double-strand break repair nuclease NurA (339 aa).

Mn(2+) contacts are provided by D58 and D133.

The protein belongs to the NurA family. In terms of assembly, homodimer. Forms a complex with HerA. Requires Mn(2+) as cofactor.

With respect to regulation, nuclease activity requires the presence of HerA. Another report shows endo- and exonuclease activity in the absence of HerA; HerA stimulates the exo- but not endonuclease. LhrC-Core (Hel112) inhibits the exonuclease activity of the HerA-NurA complex on ss- and dsDNA, has no effect on the nicking activity of NurA. Endo- and exonuclease activities are inhibited by ATP; ATP may subtract divalent ions from the reaction preventing nuclease activity, HerA can alleviate ATP inhibition. In terms of biological role, involved in DNA double-strand break (DSB) repair. Probably acts with HerA to stimulate resection of the 5' strand and produce the long 3' single-strand that is required for RadA loading. NurA and HerA together stimulate the end-resection of six nucleotides of a linear DNA substrate. Processes linear double-stranded (ds)DNA probes with 3' or 5' single-stranded overhangs or blunt ends. Has endonuclease activity on single-stranded (ss)DNA and nicking activity on dsDNA without HerA as well as 5'- and 3'-exonuclease activity on ssDNA. Binds ssDNA, dsDNA, forked and bubble DNA equally well. This is DNA double-strand break repair nuclease NurA from Saccharolobus solfataricus (strain ATCC 35092 / DSM 1617 / JCM 11322 / P2) (Sulfolobus solfataricus).